The chain runs to 277 residues: Caspase-3 (277 aa).

The residue at position 1 (Met-1) is an N-acetylmethionine. 2 propeptides span residues 1-9 (MENTENSVD) and 10-28 (SKSI…QSMD). Positions 1-10 (MENTENSVDS) are enriched in polar residues. Residues 1–20 (MENTENSVDSKSIKNLEPKI) form a disordered region. Lys-11 is modified (N6-acetyllysine). Over residues 11–20 (KSIKNLEPKI) the composition is skewed to basic and acidic residues. Residue Ser-26 is modified to Phosphoserine. Catalysis depends on residues His-121 and Cys-163. The residue at position 163 (Cys-163) is an S-nitrosocysteine; in inhibited form.

It belongs to the peptidase C14A family. Heterotetramer that consists of two anti-parallel arranged heterodimers, each one formed by a 17 kDa (p17) and a 12 kDa (p12) subunit. Interacts with BIRC6/bruce. In terms of processing, cleavage by granzyme B, caspase-6, caspase-8 and caspase-10 generates the two active subunits. Additional processing of the propeptides is likely due to the autocatalytic activity of the activated protease. Active heterodimers between the small subunit of caspase-7 protease and the large subunit of caspase-3 also occur and vice versa. S-nitrosylated on its catalytic site cysteine in unstimulated cell lines and denitrosylated upon activation of the Fas apoptotic pathway, associated with an increase in intracellular caspase activity. Fas therefore activates caspase-3 not only by inducing the cleavage of the caspase zymogen to its active subunits, but also by stimulating the denitrosylation of its active site thiol. Post-translationally, ubiquitinated by BIRC6; this activity is inhibited by DIABLO/SMAC.

It is found in the cytoplasm. The catalysed reaction is Strict requirement for an Asp residue at positions P1 and P4. It has a preferred cleavage sequence of Asp-Xaa-Xaa-Asp-|- with a hydrophobic amino-acid residue at P2 and a hydrophilic amino-acid residue at P3, although Val or Ala are also accepted at this position.. Inhibited by BIRC6; following inhibition of BIRC6-caspase binding by DIABLO/SMAC, BIRC6 is subjected to caspase cleavage, leading to an increase in active caspases. In terms of biological role, involved in the activation cascade of caspases responsible for apoptosis execution. At the onset of apoptosis, it proteolytically cleaves poly(ADP-ribose) polymerase PARP1 at a '216-Asp-|-Gly-217' bond. Cleaves and activates sterol regulatory element binding proteins (SREBPs) between the basic helix-loop-helix leucine zipper domain and the membrane attachment domain. Cleaves and activates caspase-6, -7 and -9 (CASP6, CASP7 and CASP9, respectively). Cleaves and inactivates interleukin-18 (IL18). Triggers cell adhesion in sympathetic neurons through RET cleavage. Cleaves IL-1 beta between an Asp and an Ala, releasing the mature cytokine which is involved in a variety of inflammatory processes. Cleaves and inhibits serine/threonine-protein kinase AKT1 in response to oxidative stress. Acts as an inhibitor of type I interferon production during virus-induced apoptosis by mediating cleavage of antiviral proteins CGAS, IRF3 and MAVS, thereby preventing cytokine overproduction. Also involved in pyroptosis by mediating cleavage and activation of gasdermin-E (GSDME). Cleaves XRCC4 and phospholipid scramblase proteins XKR4, XKR8 and XKR9, leading to promote phosphatidylserine exposure on apoptotic cell surface. Cleaves BIRC6 following inhibition of BIRC6-caspase binding by DIABLO/SMAC. This is Caspase-3 (CASP3) from Pan troglodytes (Chimpanzee).